A 155-amino-acid polypeptide reads, in one-letter code: Biotin carboxyl carrier protein of acetyl-CoA carboxylase (155 aa).

Residues 72–155 (AASDELSGHL…EFDEPLIVIE (84 aa)) enclose the Biotinyl-binding domain. Lys-121 carries the N6-biotinyllysine modification.

In terms of assembly, homodimer.

Its pathway is lipid metabolism; fatty acid biosynthesis. Its function is as follows. This protein is a component of the acetyl coenzyme A carboxylase complex; first, biotin carboxylase catalyzes the carboxylation of the carrier protein and then the transcarboxylase transfers the carboxyl group to form malonyl-CoA. This is Biotin carboxyl carrier protein of acetyl-CoA carboxylase (accB) from Haemophilus influenzae (strain ATCC 51907 / DSM 11121 / KW20 / Rd).